The sequence spans 38 residues: Large ribosomal subunit protein bL36A (38 aa).

Belongs to the bacterial ribosomal protein bL36 family.

The protein is Large ribosomal subunit protein bL36A of Cronobacter sakazakii (strain ATCC BAA-894) (Enterobacter sakazakii).